A 90-amino-acid chain; its full sequence is MEIRRQGLIVWLHSLKQAKMLRKFGNVHYVSKRLKYVVVYCNMEDAERIIAKIRSYSFVKQVDLSYKPFLKMEFESKQDKAKEYDYKAGL.

It belongs to the UPF0298 family.

Its subcellular location is the cytoplasm. This is UPF0298 protein BLi01717/BL02989 from Bacillus licheniformis (strain ATCC 14580 / DSM 13 / JCM 2505 / CCUG 7422 / NBRC 12200 / NCIMB 9375 / NCTC 10341 / NRRL NRS-1264 / Gibson 46).